Reading from the N-terminus, the 177-residue chain is B-phycoerythrin beta chain (177 aa).

Phycourobilin-binding residues include cysteine 50 and cysteine 61. Residue asparagine 72 is modified to N4-methylasparagine. Residues cysteine 82 and cysteine 158 each contribute to the (2R,3E)-phycoerythrobilin site.

The protein belongs to the phycobiliprotein family. As to quaternary structure, heteromer of 6 alpha, 6 beta and one gamma chain. In terms of processing, contains two covalently linked phycoerythrobilin chromophores and one covalently linked phycourobilin chromophore.

The protein resides in the plastid. It is found in the chloroplast thylakoid membrane. Functionally, light-harvesting photosynthetic bile pigment-protein from the phycobiliprotein complex. This is B-phycoerythrin beta chain (cpeB) from Rhodella violacea (Red alga).